Consider the following 265-residue polypeptide: MAAPEVSSAGPNMLHPNSRTLTLRGKRGHAAEDSSQGAVSDCKKMHSSLNKVTACYRQLVLCVGGTSDCTRLREELEESRKKAFDLSTDLSNTLMVLLMNEGVSQEDRVELERIWVLFLSTLEFFQQDLCKAHHLCQLFPLHGRRKRLVNTGVIGKTSEVAYRARNIKSPSSSRMHENQQRTERPCSPDLAGQIEHMERMLHDMQMKVSIPIWTVEATEEAWAEVASTCDLDECSDNEILAGEDITSRGCCAHGQSLPGPLCMVS.

A disordered region spans residues 1 to 37; that stretch reads MAAPEVSSAGPNMLHPNSRTLTLRGKRGHAAEDSSQG. Residues 70–92 adopt a coiled-coil conformation; the sequence is TRLREELEESRKKAFDLSTDLSN. The interval 168–187 is disordered; that stretch reads KSPSSSRMHENQQRTERPCS. Residues 174 to 186 show a composition bias toward basic and acidic residues; sequence RMHENQQRTERPC.

Belongs to the RGS7BP/RGS9BP family.

Its function is as follows. Regulator of G protein-coupled receptor (GPCR) signaling. Probably acts by regulating the activity of some 'R7' family protein (RGS6, RGS7, RGS9 and/or RGS11). This Xenopus tropicalis (Western clawed frog) protein is Regulator of G-protein signaling 9-binding protein (rgs9bp).